Here is a 220-residue protein sequence, read N- to C-terminus: MOB kinase activator-like 3 (220 aa).

Zn(2+) contacts are provided by Cys83, Cys88, His165, and His170.

It belongs to the MOB1/phocein family.

The polypeptide is MOB kinase activator-like 3 (Mob3) (Drosophila melanogaster (Fruit fly)).